Consider the following 73-residue polypeptide: Disintegrin mojastin-2 (73 aa).

In terms of domain architecture, Disintegrin spans 1 to 73; that stretch reads EAGEECDCGS…ADCPRNGLYG (73 aa). Intrachain disulfides connect Cys-6-Cys-21, Cys-8-Cys-16, Cys-15-Cys-38, Cys-29-Cys-35, Cys-34-Cys-59, and Cys-47-Cys-66. Residues 51-53 carry the Cell attachment site motif; that stretch reads RGD.

This sequence belongs to the venom metalloproteinase (M12B) family. P-II subfamily. P-IIa sub-subfamily. Monomer (disintegrin). Expressed by the venom gland.

It localises to the secreted. Inhibits the three processes involved in platelet function (adhesion, activation and aggregation). It inhibits platelet adhesion to fibronectin with an IC(50) of 58.6 nM. It inhibits ATP release from platelet induced by ADP with an IC(50) of 19.5 nM on platelet-rich plasma, probably by binding to ADP receptors (P2RY1 and P2RY12). Finally, it inhibits ADP-induced platelet aggregation with IC(50) of 44.7 nM on platelet-rich plasma and 19.3 nM on whole blood, probably by binding to alpha-IIb/beta-3 (ITGA2B/ITGB3). In terms of biological role, inhibits ADP-induced platelet aggregation (IC(50) = 13.8 nM) probably by binding to alpha-IIb/beta-3 (ITGA2B/ITGB3) located on the platelet surface. The polypeptide is Disintegrin mojastin-2 (Crotalus scutulatus scutulatus (Mojave rattlesnake)).